The sequence spans 266 residues: Translation initiation factor 2 subunit alpha (266 aa).

Residues 12 to 83 (GEILIATVKQ…RKGTVDVSLK (72 aa)) form the S1 motif domain.

Belongs to the eIF-2-alpha family. Heterotrimer composed of an alpha, a beta and a gamma chain.

In terms of biological role, eIF-2 functions in the early steps of protein synthesis by forming a ternary complex with GTP and initiator tRNA. The chain is Translation initiation factor 2 subunit alpha from Saccharolobus islandicus (strain L.S.2.15 / Lassen #1) (Sulfolobus islandicus).